A 241-amino-acid polypeptide reads, in one-letter code: MATVSMRDMLKAGVHFGHQTRYWNPKMKPFIFGARNKVHIINLEKTVPMFNEALAELNKISARKGKILFVGTKRAASEAVREAANSCDQFFVNHRWLGGMLTNWKTVRQSIKRLKDLETQSQDGTFEKLTKKEALMRTRELEKLENSLGGIKDMGGLPDALFVIDADHEHIAIKEANNLGIPVFAIVDTNSDPDGVDFVIPGNDDAIRAVSLYLGAVAATVREGRSQDLASQAEESFVEAE.

The protein belongs to the universal ribosomal protein uS2 family.

The polypeptide is Small ribosomal subunit protein uS2 (Salmonella choleraesuis (strain SC-B67)).